Reading from the N-terminus, the 4625-residue chain is Dynein-1-alpha heavy chain, flagellar inner arm I1 complex (4625 aa).

A stem region spans residues 1 to 1919 (MDRRLEWVKE…LIRQCTGLFK (1919 aa)). Residues 70–84 (EQAPEAEDGEGEEHD) show a composition bias toward acidic residues. The tract at residues 70 to 163 (EQAPEAEDGE…DEPPAPPAPK (94 aa)) is disordered. Residues 111 to 140 (EDAPAAAAEANGANPEDEAAAPADGAADGA) are compositionally biased toward low complexity. A compositionally biased stretch (acidic residues) spans 144–155 (GGEEGDGAEGDE). 960-967 (AGTNSGKS) is a binding site for ATP. Coiled-coil stretches lie at residues 1227 to 1259 (EELKQVLNTVNTIRGESMVMELRYADLEERYRT) and 1339 to 1409 (TVEL…AVRQ). 4 AAA regions span residues 1920–2141 (YGYE…VLVM), 2201–2437 (DVVE…RRPK), 2550–2800 (EPPA…IYEG), and 2906–3155 (NFYN…LRRY). ATP-binding positions include 1958–1965 (GPAGTGKT), 2242–2249 (GQTGGGKT), 2588–2595 (GESGTAKS), and 2945–2952 (GVGGSGKQ). Coiled-coil stretches lie at residues 3192-3297 (LEKL…IRSY) and 3400-3494 (KRKK…LIGD). The stalk stretch occupies residues 3192–3494 (LEKLIQAAVE…ESRRDRLIGD (303 aa)). AAA stretches follow at residues 3542-3773 (LTSD…EIAE) and 3998-4216 (ITRF…LIST). 3680–3687 (GPEISGKT) is an ATP binding site. Residues 3701-3788 (EQLLNVTLRH…KVTAAEIEET (88 aa)) adopt a coiled-coil conformation.

The protein belongs to the dynein heavy chain family. As to quaternary structure, the I1 inner arm complex (also known as the f dynein complex) is a two-headed isoform composed of two heavy chains (1-alpha and 1-beta), three intermediate chains and three light chains. I1 occupies a specific position proximal to the first radial spoke and repeats every 96 nm along the length of the axoneme.

Its subcellular location is the cell projection. It localises to the cilium. The protein localises to the flagellum. The protein resides in the cytoplasm. It is found in the cytoskeleton. Its subcellular location is the flagellum axoneme. Functionally, force generating protein of eukaryotic cilia and flagella. Produces force towards the minus ends of microtubules. Dynein has ATPase activity; the force-producing power stroke is thought to occur on release of ADP. Required for assembly of the I1 inner arm complex and its targeting to the appropriate axoneme location. Also required for phototaxis. In Chlamydomonas reinhardtii (Chlamydomonas smithii), this protein is Dynein-1-alpha heavy chain, flagellar inner arm I1 complex (DHC1).